Consider the following 267-residue polypeptide: Indole-3-glycerol phosphate synthase (267 aa).

It belongs to the TrpC family.

The enzyme catalyses 1-(2-carboxyphenylamino)-1-deoxy-D-ribulose 5-phosphate + H(+) = (1S,2R)-1-C-(indol-3-yl)glycerol 3-phosphate + CO2 + H2O. Its pathway is amino-acid biosynthesis; L-tryptophan biosynthesis; L-tryptophan from chorismate: step 4/5. This Polynucleobacter necessarius subsp. necessarius (strain STIR1) protein is Indole-3-glycerol phosphate synthase.